A 596-amino-acid chain; its full sequence is Ubiquilin-4 (596 aa).

The 75-residue stretch at 13–87 (IRVTVKTPKD…VHLVIKTPQK (75 aa)) folds into the Ubiquitin-like domain. Residues lysine 23 and lysine 62 each participate in a glycyl lysine isopeptide (Lys-Gly) (interchain with G-Cter in SUMO2) cross-link. A disordered region spans residues 89–148 (QDPVTAAASPPSTPDSASAPSTTPASPAAAPVQPCSSGNTTSDAGSGGGPSPVAAEGPSS). 2 stretches are compositionally biased toward low complexity: residues 93 to 119 (TAAA…AAAP) and 139 to 148 (SPVAAEGPSS). Serine 139 carries the phosphoserine modification. STI1 domains lie at 187-224 (NPEM…QQLM) and 225-256 (ERNP…MQEM). Threonine 282 is subject to Phosphothreonine. Residues 297-361 (GNNPFSSLAG…QVHPTVSNPF (65 aa)) are disordered. Low complexity predominate over residues 302–313 (SSLAGNSDNSSS). The residue at position 313 (serine 313) is a Phosphoserine. Positions 324–335 (LPNPWSPSPPTS) are enriched in pro residues. The span at 339–349 (GSGGEGTGGSG) shows a compositional bias: gly residues. Residues 352-361 (QVHPTVSNPF) show a composition bias toward polar residues. 2 consecutive STI1 domains span residues 388-435 (NPQL…QEQL) and 439-471 (LPVF…QQGL). Positions 482–528 (VPSLGSFGTPRTSVPLAGSNSGSSAEAPTSSPGVPATSPPSAGSNAQ) are disordered. A compositionally biased stretch (polar residues) spans 499-513 (GSNSGSSAEAPTSSP). One can recognise a UBA domain in the interval 548-593 (PMPEVRFQQQLEQLNSMGFINREANLQALIATGGDINAAIERLLGS).

In terms of assembly, homooligomer. Binds signal sequences of proteins that are targeted to the endoplasmic reticulum. Interacts (via UBA domain) with GJA1 (not ubiquitinated) and with ubiquitin; both compete for the same binding site. Interacts (via UBA domain) with ubiquitin and with polyubiquitin chains. Interacts (via ubiquitin-like domain) with PSMD2 and PSMD4, regulatory subunits of the 26S proteasome. Interacts with ATXN1/SCA1; interaction with ATXN1 inhibits polyubiquitination of UBQLN4 and interferes with PSMD4 binding. Interacts with HERPUD1. Interacts (via ubiquitin-like domain) with UBQLN1 (via UBA domain). Interacts with UBQLN2. Interacts (via STI1 1 and 2 domains) with MAP1LC3A/B/C. Interacts with BAG6. Interacts with MRE11 (when ubiquitinated); interaction with ubiquitinated MRE11 leads to MRE11 removal from chromatin. Interacts with DESI1/POST; leading to nuclear export. Interacts with BCL2A1 and BCL2L10. In terms of processing, phosphorylated by ATM at Ser-313 in response to DNA damage, leading to localization in the nucleus and recruitment to sites of DNA damage. Post-translationally, ubiquitinated; this does not lead to proteasomal degradation. May undergo both 'Lys-48'- and 'Lys-63'-linked polyubiquitination. In terms of tissue distribution, detected in testis, ovary, thyroid, kidney, thymus, heart, liver, lung and spleen (at protein level). Highly expressed in heart, skeletal muscle, kidney, liver and brain. Detected at lower levels in testis, lung and spleen.

It localises to the nucleus. The protein resides in the cytoplasm. It is found in the chromosome. Its subcellular location is the endoplasmic reticulum. The protein localises to the perinuclear region. It localises to the cytoplasmic vesicle. The protein resides in the autophagosome. Regulator of protein degradation that mediates the proteasomal targeting of misfolded, mislocalized or accumulated proteins. Acts by binding polyubiquitin chains of target proteins via its UBA domain and by interacting with subunits of the proteasome via its ubiquitin-like domain. Key regulator of DNA repair that represses homologous recombination repair: in response to DNA damage, recruited to sites of DNA damage following phosphorylation by ATM and acts by binding and removing ubiquitinated MRE11 from damaged chromatin, leading to MRE11 degradation by the proteasome. MRE11 degradation prevents homologous recombination repair, redirecting double-strand break repair toward non-homologous end joining (NHEJ). Specifically recognizes and binds mislocalized transmembrane-containing proteins and targets them to proteasomal degradation. Collaborates with DESI1/POST in the export of ubiquitinated proteins from the nucleus to the cytoplasm. Plays a role in the regulation of the proteasomal degradation of non-ubiquitinated GJA1. Acts as an adapter protein that recruits UBQLN1 to the autophagy machinery. Mediates the association of UBQLN1 with autophagosomes and the autophagy-related protein LC3 (MAP1LC3A/B/C) and may assist in the maturation of autophagosomes to autolysosomes by mediating autophagosome-lysosome fusion. The polypeptide is Ubiquilin-4 (Mus musculus (Mouse)).